The following is a 138-amino-acid chain: Large ribosomal subunit protein uL16 (138 aa).

A compositionally biased stretch (basic residues) spans Met-1–Gly-16. Residues Met-1–Thr-25 are disordered.

This sequence belongs to the universal ribosomal protein uL16 family. As to quaternary structure, part of the 50S ribosomal subunit.

Its function is as follows. Binds 23S rRNA and is also seen to make contacts with the A and possibly P site tRNAs. The polypeptide is Large ribosomal subunit protein uL16 (Pseudarthrobacter chlorophenolicus (strain ATCC 700700 / DSM 12829 / CIP 107037 / JCM 12360 / KCTC 9906 / NCIMB 13794 / A6) (Arthrobacter chlorophenolicus)).